The sequence spans 39 residues: Alpha-conotoxin ArIA (39 aa).

The propeptide occupies 1 to 17; it reads SDGRNVAAKAFHRIGRT. Disulfide bonds link Cys-22–Cys-28 and Cys-23–Cys-36. The tract at residues 24 to 26 is ser-Xaa-Pro motif, crucial for potent interaction with nAChR; sequence SNP. Pro-33 is modified (4-hydroxyproline; in ArIA).

This sequence belongs to the conotoxin A superfamily. In terms of tissue distribution, expressed by the venom duct.

The protein resides in the secreted. Alpha-conotoxins act on postsynaptic membranes, they bind to the nicotinic acetylcholine receptors (nAChR) and thus inhibit them. This toxin acts as a competitive inhibitor and is 3-fold more potent on alpha-7/CHRNA7 nAChRs (IC(50)=6 nM) than on alpha-3-beta-2/CHRNA3-CHRNB2 nAChR (IC(50)=18 nM). Its function is as follows. Acts as a competitive inhibitor and is 33-fold more potent on alpha-7/CHRNA7 nAChRs (IC(50)=1.8 nM) than on alpha-3-beta-2/CHRNA3-CHRNB2 nAChR (IC(50)=60.1 nM). In Conus arenatus (Sand-dusted cone), this protein is Alpha-conotoxin ArIA.